Reading from the N-terminus, the 521-residue chain is Feruloyl esterase B (521 aa).

Residues 1–17 (MKVASLLSLALPGAALA) form the signal peptide. Cystine bridges form between C26–C72 and C61–C111. Residues N37, N51, N77, N95, N144, and N177 are each glycosylated (N-linked (GlcNAc...) asparagine). 3 cysteine pairs are disulfide-bonded: C184-C438, C253-C270, and C279-C288. S185 serves as the catalytic Acyl-ester intermediate. Ca(2+)-binding residues include D254, D257, A259, D261, and I263. N-linked (GlcNAc...) asparagine glycosylation is found at N284, N347, N352, and N378. Active-site charge relay system residues include D397 and H437. N488 and N511 each carry an N-linked (GlcNAc...) asparagine glycan. Residues C498 and C520 are joined by a disulfide bond.

The protein belongs to the tannase family. As to quaternary structure, homodimer. In terms of processing, glycosylated.

Its subcellular location is the secreted. It catalyses the reaction feruloyl-polysaccharide + H2O = ferulate + polysaccharide.. With respect to regulation, inhibited by the specific serine esterase inhibitor AEBSF. Its function is as follows. Involved in degradation of plant cell walls. Hydrolyzes of the feruloyl-arabinose ester bond in arabinoxylans as well as the feruloyl-galactose and feruloyl-arabinose ester bonds in pectin. In Aspergillus niger, this protein is Feruloyl esterase B (faeB).